Reading from the N-terminus, the 183-residue chain is V-type ATP synthase subunit E (183 aa).

The protein belongs to the V-ATPase E subunit family.

Its function is as follows. Produces ATP from ADP in the presence of a proton gradient across the membrane. This is V-type ATP synthase subunit E from Fusobacterium nucleatum subsp. nucleatum (strain ATCC 25586 / DSM 15643 / BCRC 10681 / CIP 101130 / JCM 8532 / KCTC 2640 / LMG 13131 / VPI 4355).